We begin with the raw amino-acid sequence, 553 residues long: Undecaprenyl phosphate-alpha-4-amino-4-deoxy-L-arabinose arabinosyl transferase (553 aa).

12 helical membrane passes run 8–28, 81–101, 113–133, 136–156, 176–196, 204–224, 255–275, 289–309, 313–333, 351–371, 384–404, and 412–432; these read LLFS…RALW, FAVR…VYWL, LLSA…SYAV, PMVT…AQSA, LMTK…PWMI, LLLF…PWAI, APFW…VGLL, NSGS…FSLA, LPTY…HHGI, VAFG…WGLV, VLLG…CLVA, and AALC…DKVI.

It belongs to the glycosyltransferase 83 family.

The protein localises to the cell inner membrane. It carries out the reaction 4-amino-4-deoxy-alpha-L-arabinopyranosyl di-trans,octa-cis-undecaprenyl phosphate + lipid IVA = lipid IIA + di-trans,octa-cis-undecaprenyl phosphate.. Its pathway is lipopolysaccharide metabolism; 4-amino-4-deoxy-beta-L-arabinose-lipid A biosynthesis. In terms of biological role, catalyzes the transfer of the L-Ara4N moiety of the glycolipid undecaprenyl phosphate-alpha-L-Ara4N to lipid A. The modified arabinose is attached to lipid A and is required for resistance to polymyxin and cationic antimicrobial peptides. This is Undecaprenyl phosphate-alpha-4-amino-4-deoxy-L-arabinose arabinosyl transferase from Erwinia tasmaniensis (strain DSM 17950 / CFBP 7177 / CIP 109463 / NCPPB 4357 / Et1/99).